The sequence spans 613 residues: Ribosome-associated molecular chaperone SSB1 (613 aa).

The segment at 1-391 is nucleotide binding domain (NBD); that stretch reads MAEGVFQGAI…ILTGQSTSED (391 aa). ATP-binding positions include 16-18, Lys73, 205-207, 271-278, and Gly342; these read TTY, GGT, and ERAKRTLS. The segment at 392 to 402 is inter-domain linker; the sequence is TKDLLLLDVAP. Positions 403–613 are substrate binding domain (SBD); sequence LSLGVGMQGD…RVVTKAMSSR (211 aa). The interval 516 to 612 is lid domain (SBDalpha); it reads SDEIEKMVNQ…KRVVTKAMSS (97 aa). Residues 574 to 582 carry the Nuclear export signal motif; it reads IESALSDAL.

This sequence belongs to the heat shock protein 70 family. Ssb-type Hsp70 subfamily. In terms of assembly, binds to ribosomes. Binds close to the ribosomal tunnel exit via contacts with both ribosomal proteins and rRNA. Directly interacts with nascent polypeptides. This interaction is dependent on the ribosome-associated complex (RAC). Interacts with SSE1. Interacts with FES1.

The protein localises to the cytoplasm. It carries out the reaction ATP + H2O = ADP + phosphate + H(+). In terms of biological role, ribosome-bound, Hsp70-type chaperone that assists in the cotranslational folding of newly synthesized proteins in the cytosol. Stimulates folding by interacting with nascent chains, binding to short, largely hydrophobic sequences exposed by unfolded proteins, thereby stabilizing longer, more slowly translated, and aggregation-prone nascent polypeptides and domains that cannot fold stably until fully synthesized. The Hsp70-protein substrate interaction depends on ATP-binding and on allosteric regulation between the NBD and the SBD. The ATP-bound state is characterized by a fast exchange rate of substrate (low affinity state), while in the ADP-bound state exchange is much slower (high affinity state). During the Hsp70 cycle, the chaperone switches between the ATP-bound state (open conformation) and the ADP-bound state (closed conformation) by major conformational rearrangements involving mainly the lid domain. Ssb cooperates with a specific Hsp40/Hsp70 co-chaperone termed the ribosome-associated complex (RAC), which stimulates the ATPase activity of the ribosome-associated pool of Ssbs and switches it to the high affinity substrate binding state. Hsp110 chaperone SSE1 and FES1 act as nucleotide exchange factors that cause substrate release. This chain is Ribosome-associated molecular chaperone SSB1 (SSB1), found in Zygosaccharomyces rouxii (strain ATCC 2623 / CBS 732 / NBRC 1130 / NCYC 568 / NRRL Y-229).